The following is a 202-amino-acid chain: Adenylyl-sulfate kinase (202 aa).

35–42 (GLSGSGKS) lines the ATP pocket. Catalysis depends on Ser109, which acts as the Phosphoserine intermediate.

This sequence belongs to the APS kinase family.

It catalyses the reaction adenosine 5'-phosphosulfate + ATP = 3'-phosphoadenylyl sulfate + ADP + H(+). It functions in the pathway sulfur metabolism; hydrogen sulfide biosynthesis; sulfite from sulfate: step 2/3. Catalyzes the synthesis of activated sulfate. This chain is Adenylyl-sulfate kinase, found in Bacteroides fragilis (strain YCH46).